The following is an 89-amino-acid chain: Chromosomal protein MC1a (89 aa).

Protects DNA against thermal denaturation and modulates transcription. This Methanothrix soehngenii (Methanosaeta concilii) protein is Chromosomal protein MC1a.